Reading from the N-terminus, the 307-residue chain is Glycine--tRNA ligase alpha subunit (307 aa).

Belongs to the class-II aminoacyl-tRNA synthetase family. In terms of assembly, tetramer of two alpha and two beta subunits.

The protein resides in the cytoplasm. The catalysed reaction is tRNA(Gly) + glycine + ATP = glycyl-tRNA(Gly) + AMP + diphosphate. In Xylella fastidiosa (strain M23), this protein is Glycine--tRNA ligase alpha subunit.